The sequence spans 435 residues: Casein kinase I homolog 2 (435 aa).

Residues 12–282 form the Protein kinase domain; the sequence is YRVGRKIGEG…FLQELFDDVL (271 aa). Residues 18–26 and lysine 41 contribute to the ATP site; that span reads IGEGSFGVI. Catalysis depends on aspartate 131, which acts as the Proton acceptor. The residue at position 361 (serine 361) is a Phosphoserine.

The protein belongs to the protein kinase superfamily. CK1 Ser/Thr protein kinase family. Casein kinase I subfamily.

Its subcellular location is the cytoplasm. The enzyme catalyses L-seryl-[protein] + ATP = O-phospho-L-seryl-[protein] + ADP + H(+). It carries out the reaction L-threonyl-[protein] + ATP = O-phospho-L-threonyl-[protein] + ADP + H(+). In terms of biological role, casein kinases are operationally defined by their preferential utilization of acidic proteins such as caseins as substrates. May contribute to the regulation of morphology. The chain is Casein kinase I homolog 2 (cki2) from Schizosaccharomyces pombe (strain 972 / ATCC 24843) (Fission yeast).